The chain runs to 842 residues: Alanine--tRNA ligase (842 aa).

4 residues coordinate Zn(2+): H549, H553, C650, and H654.

It belongs to the class-II aminoacyl-tRNA synthetase family. The cofactor is Zn(2+).

Its subcellular location is the cytoplasm. The catalysed reaction is tRNA(Ala) + L-alanine + ATP = L-alanyl-tRNA(Ala) + AMP + diphosphate. Functionally, catalyzes the attachment of alanine to tRNA(Ala) in a two-step reaction: alanine is first activated by ATP to form Ala-AMP and then transferred to the acceptor end of tRNA(Ala). Also edits incorrectly charged Ser-tRNA(Ala) and Gly-tRNA(Ala) via its editing domain. This chain is Alanine--tRNA ligase, found in Campylobacter jejuni subsp. doylei (strain ATCC BAA-1458 / RM4099 / 269.97).